We begin with the raw amino-acid sequence, 184 residues long: Dirigent protein 13 (184 aa).

The signal sequence occupies residues 1–25; the sequence is MANQIYIISLIFLSVLLYQSTTVLS. Cys36 and Cys182 are joined by a disulfide. Asn55 and Asn119 each carry an N-linked (GlcNAc...) asparagine glycan.

This sequence belongs to the plant dirigent protein family. In terms of assembly, homodimer. As to expression, expressed in root vasculature and meristems, cotyledons, flowers, siliques, and leaf trichomes. Localized in the interfascicular/vascular cambia and developing xylem.

The protein resides in the secreted. Its subcellular location is the extracellular space. It is found in the apoplast. Its function is as follows. Dirigent proteins impart stereoselectivity on the phenoxy radical-coupling reaction, yielding optically active lignans from two molecules of coniferyl alcohol in the biosynthesis of lignans, flavonolignans, and alkaloids and thus plays a central role in plant secondary metabolism. The chain is Dirigent protein 13 (DIR13) from Arabidopsis thaliana (Mouse-ear cress).